A 464-amino-acid polypeptide reads, in one-letter code: ATP synthase subunit beta (464 aa).

Glycine 152–threonine 159 lines the ATP pocket.

The protein belongs to the ATPase alpha/beta chains family. F-type ATPases have 2 components, CF(1) - the catalytic core - and CF(0) - the membrane proton channel. CF(1) has five subunits: alpha(3), beta(3), gamma(1), delta(1), epsilon(1). CF(0) has three main subunits: a(1), b(2) and c(9-12). The alpha and beta chains form an alternating ring which encloses part of the gamma chain. CF(1) is attached to CF(0) by a central stalk formed by the gamma and epsilon chains, while a peripheral stalk is formed by the delta and b chains.

It is found in the cell membrane. It catalyses the reaction ATP + H2O + 4 H(+)(in) = ADP + phosphate + 5 H(+)(out). Produces ATP from ADP in the presence of a proton gradient across the membrane. The catalytic sites are hosted primarily by the beta subunits. The sequence is that of ATP synthase subunit beta from Clostridioides difficile (strain 630) (Peptoclostridium difficile).